The primary structure comprises 115 residues: Large ribosomal subunit protein P2 (115 aa).

N-acetylmethionine is present on Met1. Phosphoserine is present on residues Ser17 and Ser19. Lys21 carries the post-translational modification N6-acetyllysine; alternate. Lys21 is modified (N6-succinyllysine; alternate). Low complexity predominate over residues 76–90; sequence APGSAAPAAGSAPAA. The tract at residues 76 to 115 is disordered; that stretch reads APGSAAPAAGSAPAAAEERKEEKKEESEESDDDMGFGLFD. Residues Ser79 and Ser86 each carry the phosphoserine modification. A compositionally biased stretch (basic and acidic residues) spans 91-101; the sequence is AEERKEEKKEE. Residues Ser102 and Ser105 each carry the phosphoserine modification.

The protein belongs to the eukaryotic ribosomal protein P1/P2 family. In terms of assembly, heterodimer with RPLP1 at the lateral ribosomal stalk of the large ribosomal subunit.

In terms of biological role, plays an important role in the elongation step of protein synthesis. The sequence is that of Large ribosomal subunit protein P2 (RPLP2) from Equus caballus (Horse).